The primary structure comprises 79 residues: NAD(P)H-quinone oxidoreductase subunit L (79 aa).

2 helical membrane-spanning segments follow: residues 10-30 and 48-68; these read IIIA…IPAV and GFMY…SPFL.

The protein belongs to the complex I NdhL subunit family. In terms of assembly, NDH-1 can be composed of about 15 different subunits; different subcomplexes with different compositions have been identified which probably have different functions.

Its subcellular location is the cellular thylakoid membrane. It catalyses the reaction a plastoquinone + NADH + (n+1) H(+)(in) = a plastoquinol + NAD(+) + n H(+)(out). The enzyme catalyses a plastoquinone + NADPH + (n+1) H(+)(in) = a plastoquinol + NADP(+) + n H(+)(out). Its function is as follows. NDH-1 shuttles electrons from an unknown electron donor, via FMN and iron-sulfur (Fe-S) centers, to quinones in the respiratory and/or the photosynthetic chain. The immediate electron acceptor for the enzyme in this species is believed to be plastoquinone. Couples the redox reaction to proton translocation, and thus conserves the redox energy in a proton gradient. Cyanobacterial NDH-1 also plays a role in inorganic carbon-concentration. This Microcystis aeruginosa (strain NIES-843 / IAM M-2473) protein is NAD(P)H-quinone oxidoreductase subunit L.